A 77-amino-acid chain; its full sequence is Secapin (77 aa).

The first 32 residues, 1–32, serve as a signal peptide directing secretion; sequence MKNYSKNATYLITVLLFSFVAMLLIIPSKCEA. Positions 33-52 are excised as a propeptide; sequence VSNDMQPLEARSADLVPEPR. A disulfide bridge connects residues Cys-61 and Cys-72.

Belongs to the secapin family. In terms of tissue distribution, expressed by the venom gland.

It localises to the secreted. Its function is as follows. Nontoxic peptide. This Vespa magnifica (Hornet) protein is Secapin.